We begin with the raw amino-acid sequence, 160 residues long: Bursicon (160 aa).

Positions 1-20 are cleaved as a signal peptide; the sequence is MSVLNTFLVIVALILCYVND. Residues 38–131 enclose the CTCK domain; sequence CQECQMTAVI…PLQCMCRPCG (94 aa). 5 cysteine pairs are disulfide-bonded: cysteine 41-cysteine 90, cysteine 55-cysteine 104, cysteine 65-cysteine 125, cysteine 69-cysteine 127, and cysteine 87-cysteine 130.

In terms of assembly, heterodimer of burs and pburs.

It localises to the secreted. Functionally, final heterodimeric neurohormone released at the end of the molting cycle, involved in the sclerotization (tanning) of the insect cuticle, melanization and wing spreading. This is Bursicon from Bombyx mori (Silk moth).